The chain runs to 224 residues: Uridylate kinase (224 aa).

Residue 8-12 participates in ATP binding; that stretch reads KITGK. Gly43 serves as a coordination point for UMP. Residues Gly44 and Arg48 each coordinate ATP. UMP-binding positions include Asp66 and 114 to 120; that span reads LIPGQST. Residues Ser140, Tyr146, and Asp149 each contribute to the ATP site.

Belongs to the UMP kinase family. In terms of assembly, homohexamer.

The protein localises to the cytoplasm. The enzyme catalyses UMP + ATP = UDP + ADP. The protein operates within pyrimidine metabolism; CTP biosynthesis via de novo pathway; UDP from UMP (UMPK route): step 1/1. Inhibited by UTP. In terms of biological role, catalyzes the reversible phosphorylation of UMP to UDP. The chain is Uridylate kinase from Staphylothermus marinus (strain ATCC 43588 / DSM 3639 / JCM 9404 / F1).